Here is a 589-residue protein sequence, read N- to C-terminus: MVKRSCPSCGLEAGSEKKERGNPISVQLFPPELVEHIVSFLPVKDLVALGQTCHYFHEVCDAEGVWRRICRRLSPRIRDQSSGARPWKRAAILNYTKGLYFQAFGGRRRCLSKSVAPMLAHGYRRFLPTKDHVFILDYVGTLFFLKNALVSSTLGQIQWKRACRYVVLCRGAKDFASDPRCDTVYRKYLYVLATREQPAVVGTTGSRACDCVEVYLQSSGQRVFKMTFHHSMSFKQIVLVGQETQRALLLLTEEGKIYSLVVNETQLDQPRSYTVQLALRKVSRCLPHLRVTCMASNQSSTLYITGGTLIPRKQVPKAAELRAPDPPDQGGVYFEVHTPGVYRDLFGTLQAFDPLDHQMPLALSLPAKVLFCALGYNHLGLVDEFGRIFMQGNNRYGQLGTGDKMDRGEPTQVHYLQRPIALWCGLNHSLVLSQTSDFSKELLGCGCGAGGRLPGWPKGSASFVKLHIKVPLCACSLCSTRECLYMLSSHDIEQCPVYRDLPASRVGGSPEPSQGAGAPQDPGGTAQACEEYLSQIHSCPTLQDRMEKMKEIVGWMPLMAAQKDFFWEALDMLQRAAGGAGPDTSTPES.

The F-box domain occupies 23–69; it reads PISVQLFPPELVEHIVSFLPVKDLVALGQTCHYFHEVCDAEGVWRRI. The RCC1 repeat unit spans residues 386–435; that stretch reads GRIFMQGNNRYGQLGTGDKMDRGEPTQVHYLQRPIALWCGLNHSLVLSQT. Positions 506 to 526 are disordered; sequence VGGSPEPSQGAGAPQDPGGTA.

As to quaternary structure, directly interacts with SKP1 and CUL1.

Its function is as follows. Substrate-recognition component of the SCF (SKP1-CUL1-F-box protein)-type E3 ubiquitin ligase complex. In Mus musculus (Mouse), this protein is F-box only protein 24 (Fbxo24).